We begin with the raw amino-acid sequence, 322 residues long: MAQSEVNSVCVASDRAGDTGDQSDDSSDGSLFKTQCAPSPIQKQRHPTVKRVTLPASVETDSSSDSSIEPRPLTLKAIFERFKKKKRKKRKKRKYEPKLRPRGRPRGKPSGTRITRRSQIDAKQIKDKGAVFPFLESESGRKPLPWKKILTYEQAVARGFFHHIEKLKYEHHLKECLKQMHAGEDLEKEDLDSRRHKYMDDDGSLSPIEEPLTEDEATNPQAECDIKLVEDSCFIISSEFSRKRNLEQEKIKKESTFSKKAKDATHREKGHRRTLKGNEHVTIEEDSRPQPRPFAHLQSKVMKKGELEYLEVHHLCGLSQPL.

Disordered stretches follow at residues 1–70 (MAQS…SIEP) and 82–116 (FKKK…RITR). Position 23 is a phosphoserine (serine 23). The span at 82–107 (FKKKKRKKRKKRKYEPKLRPRGRPRG) shows a compositional bias: basic residues. Position 137 is a phosphoserine (serine 137). Residues 198–219 (YMDDDGSLSPIEEPLTEDEATN) are disordered. Serine 232 bears the Phosphoserine mark. Residues 257–267 (FSKKAKDATHR) are compositionally biased toward basic and acidic residues. A disordered region spans residues 257-276 (FSKKAKDATHREKGHRRTLK).

Component of the transcription factor SL1/TIF-IB complex, composed of TBP and at least TAF1A, TAF1B, TAF1C and TAF1D. Interacts with UBTF.

The protein resides in the nucleus. Component of the transcription factor SL1/TIF-IB complex, which is involved in the assembly of the PIC (preinitiation complex) during RNA polymerase I-dependent transcription. The rate of PIC formation probably is primarily dependent on the rate of association of SL1/TIF-IB with the rDNA promoter. SL1/TIF-IB is involved in stabilization of nucleolar transcription factor 1/UBTF on rDNA. Formation of SL1/TIF-IB excludes the association of TBP with TFIID subunits. The chain is TATA box-binding protein-associated factor RNA polymerase I subunit D (Taf1d) from Mus musculus (Mouse).